Consider the following 601-residue polypeptide: Glutathione-regulated potassium-efflux system protein KefB (601 aa).

13 helical membrane-spanning segments follow: residues 4 to 24 (SDFL…VPLA), 29 to 49 (IGAV…GLGF), 55 to 75 (EILH…GLEL), 87 to 107 (IFGV…GLLM), 115 to 135 (AAVV…LQLM), 152 to 172 (VLLF…LLAG), 177 to 197 (HFDW…LIGG), 207 to 227 (FIAA…LVLG), 230 to 250 (LFMD…GVLL), 262 to 282 (AIDP…GMSL), 284 to 304 (LGVL…LVAV), 324 to 344 (MQFA…FSTA), and 356 to 376 (ALLL…MKLV). The RCK N-terminal domain occupies 400-519 (KPQVIVVGFG…AGVTQFSRET (120 aa)).

The protein belongs to the monovalent cation:proton antiporter 2 (CPA2) transporter (TC 2.A.37) family. KefB subfamily. As to quaternary structure, interacts with the regulatory subunit KefG.

The protein resides in the cell inner membrane. In terms of biological role, pore-forming subunit of a potassium efflux system that confers protection against electrophiles. Catalyzes K(+)/H(+) antiport. This is Glutathione-regulated potassium-efflux system protein KefB from Shigella boydii serotype 18 (strain CDC 3083-94 / BS512).